The chain runs to 1154 residues: Voltage-gated inwardly rectifying potassium channel KCNH2 (1154 aa).

Residues 1 to 403 (MPVRRGHVAP…RIHRWTILHY (403 aa)) lie on the Cytoplasmic side of the membrane. A PAS domain is found at 41–70 (VIYCNDGFCELCGYSRAEVMQRPCTCDFLH). The region spanning 92–144 (RKVEIAFYRKDGSCFLCLVDVVPVKNEDGAVIMFILNFEVVMEKDMVGSPARD) is the PAC domain. The interval 233–312 (ALVGSGSPPA…ASTGAMHPLR (80 aa)) is disordered. Ser-239 bears the Phosphoserine mark. The segment covering 258 to 269 (PDGSGSSCSLAR) has biased composition (polar residues). Ser-283, Ser-284, Ser-320, and Ser-351 each carry phosphoserine. The helical transmembrane segment at 404 to 424 (SPFKAVWDWLILLLVIYTAVF) threads the bilayer. Topologically, residues 425–450 (TPYSAAFLLKETEEGSQAPDCGYACQ) are extracellular. The helical transmembrane segment at 451–471 (PLAVVDLIVDIMFIVDILINF) threads the bilayer. At 472-495 (RTTYVNANEEVVSHPGRIAVHYFK) the chain is on the cytoplasmic side. Residues 496–516 (GWFLIDMVAAIPFDLLIFGSG) form a helical membrane-spanning segment. Residues 517 to 520 (SEEL) lie on the Extracellular side of the membrane. The chain crosses the membrane as a helical; Voltage-sensor span at residues 521–541 (IGLLKTARLLRLVRVARKLDR). The Cytoplasmic segment spans residues 542 to 547 (YSEYGA). Residues 548–568 (AVLFLLMCTFALIAHWLACIW) form a helical membrane-spanning segment. The Extracellular portion of the chain corresponds to 569 to 611 (YAIGNMEQPNMDSHIGWLHNLGDQIGKPYNSSGLGGPSIKDKY). An intramembrane region (pore-forming) is located at residues 612–632 (VTALYFTFSSLTSVGFGNVSP). Positions 624–629 (SVGFGN) match the Selectivity filter motif. At 633–638 (NTNSEK) the chain is on the extracellular side. The chain crosses the membrane as a helical span at residues 639–659 (IFSICVMLIGSLMYASIFGNV). Topologically, residues 660–1154 (SAIIQRLYSG…LHRHGSDPGS (495 aa)) are cytoplasmic. The interval 742–842 (PFRGATKGCL…IHRDDLLEVL (101 aa)) is cNMP-binding domain. The tract at residues 870–985 (GSPGSTELEG…DVEKSSDTCN (116 aa)) is disordered. Residues Ser-871 and Ser-874 each carry the phosphoserine modification. The segment covering 883–892 (RQRKRKLSFR) has biased composition (basic residues). The span at 916–927 (GPSGRGQQGGPW) shows a compositional bias: gly residues. Over residues 928 to 939 (GESLSSGPSSPE) the composition is skewed to low complexity. The residue at position 1014 (Arg-1014) is an Omega-N-methylarginine. Residues 1037–1064 (RGDVESRLDALQRQLNRLETRLSADMAT) adopt a coiled-coil conformation. Residues 1125–1154 (DGPARRLSLPGQLGALTSQPLHRHGSDPGS) form a disordered region. Ser-1132 bears the Phosphoserine mark.

The protein belongs to the potassium channel family. H (Eag) (TC 1.A.1.20) subfamily. Kv11.1/KCNH2 sub-subfamily. The potassium channel is probably composed of a homo- or heterotetrameric complex of pore-forming alpha subunits that can associate with modulating beta subunits. Interacts with DNAJB12 and DNAJB14; chaperones DNAJB12 and DNAJB14 promote tetramerization. Heteromultimer with KCNH6/ERG2 and KCNH7/ERG3. Interacts with ALG10B. Forms a stable complex with KCNE1 or KCNE2, and that this heteromultimerization regulates Inward rectifier potassium channel activity. Interacts with CANX. The core-glycosylated, but not the fully glycosylated form interacts with RNF207. Interacts with NDFIP1 and NDFIP2; this interaction decreases the cell membrane expression by targeting KCNH2, through interaction with NEDD4L, for the degradation through the multivesicular bodies (MVBs)-lysosomal pathway. Post-translationally, phosphorylated on serine and threonine residues. Phosphorylation by PKA inhibits ion conduction.

The protein resides in the cell membrane. It carries out the reaction K(+)(in) = K(+)(out). Pore-forming (alpha) subunit of voltage-gated inwardly rectifying potassium channel. Characterized by unusual gating kinetics by producing relatively small outward currents during membrane depolarization and large inward currents during subsequent repolarization which reflect a rapid inactivation during depolarization and quick recovery from inactivation but slow deactivation (closing) during repolarization. Channel properties are modulated by cAMP and subunit assembly. Forms a stable complex with KCNE1 or KCNE2, and that this heteromultimerization regulates inward rectifier potassium channel activity. This chain is Voltage-gated inwardly rectifying potassium channel KCNH2, found in Sus scrofa (Pig).